We begin with the raw amino-acid sequence, 511 residues long: Probable lipid II flippase MurJ (511 aa).

11 helical membrane-spanning segments follow: residues 25–45 (DILIASIFGASMFTDAFFISF), 85–105 (SSILGFMSFFLLLLTILGGFF), 133–153 (IMFPYILLISLSSLCSSILNS), 156–178 (YFSIPAFSPIFLNISIIFFSVFF), 245–265 (ISLIINTIFSSLLNSGSISWI), 271–291 (LIEFPVGILGVSLSTVLFTSL), 315–335 (LIVSLPGSVILFFLAKPVIIV), 356–376 (LYSCGLISFIFVKILSSAFYA), 400–420 (FLIFYFQHAGIALSLSITSWV), 442–462 (FIFIIYIILATLVMIVILFVV), and 481–501 (LFFGKYVSGITYLFMMNILGI).

Belongs to the MurJ/MviN family.

Its subcellular location is the cell inner membrane. Its pathway is cell wall biogenesis; peptidoglycan biosynthesis. Involved in peptidoglycan biosynthesis. Transports lipid-linked peptidoglycan precursors from the inner to the outer leaflet of the cytoplasmic membrane. The polypeptide is Probable lipid II flippase MurJ (Buchnera aphidicola subsp. Acyrthosiphon pisum (strain APS) (Acyrthosiphon pisum symbiotic bacterium)).